The chain runs to 229 residues: UPF0758 protein Moth_0536 (229 aa).

The region spanning 107–229 is the MPN domain; it reads VIRNPRDVAG…FTSLKERNLL (123 aa). Residues His178, His180, and Asp191 each contribute to the Zn(2+) site. Residues 178–191 carry the JAMM motif motif; it reads HNHPSGDPTPSQED.

It belongs to the UPF0758 family.

The polypeptide is UPF0758 protein Moth_0536 (Moorella thermoacetica (strain ATCC 39073 / JCM 9320)).